A 116-amino-acid polypeptide reads, in one-letter code: Large ribosomal subunit protein bL19 (116 aa).

It belongs to the bacterial ribosomal protein bL19 family.

Its function is as follows. This protein is located at the 30S-50S ribosomal subunit interface and may play a role in the structure and function of the aminoacyl-tRNA binding site. This is Large ribosomal subunit protein bL19 from Staphylococcus carnosus (strain TM300).